The following is a 173-amino-acid chain: Large ribosomal subunit protein uL10 (173 aa).

This sequence belongs to the universal ribosomal protein uL10 family. As to quaternary structure, part of the ribosomal stalk of the 50S ribosomal subunit. The N-terminus interacts with L11 and the large rRNA to form the base of the stalk. The C-terminus forms an elongated spine to which L12 dimers bind in a sequential fashion forming a multimeric L10(L12)X complex.

Functionally, forms part of the ribosomal stalk, playing a central role in the interaction of the ribosome with GTP-bound translation factors. This chain is Large ribosomal subunit protein uL10, found in Bifidobacterium animalis subsp. lactis (strain AD011).